The primary structure comprises 310 residues: Putative methyltransferase mtx subunit H (310 aa).

The protein belongs to the MtrH family. As to quaternary structure, may be part of a complex composed of 3 subunits; MtxA, MtxH and MtxX.

This Methanosarcina barkeri (strain Fusaro / DSM 804) protein is Putative methyltransferase mtx subunit H (mtxH).